Consider the following 338-residue polypeptide: MKVFYDKDCDLSLIKGKNVAIIGYGSQGHAHAQNLNDSGVKVTVGLRKGGASWDKVKNAGLNVAEVNDAVKAADVIMILLPDENIAQVYNENVAPYAKQGAVLAFAHGFNVHYGQVVPRADLDVIMIAPKAPGHTVRGTYSQGGGVPHLIAVYQDKSGVARDIALSYAMANGGGRAGIIETNFREETETDLFGEQAVLCGGAVELIKAGFETLTEAGYAPEMAYFECLHELKLIVDLIYEGGIANMNYSISNNAEYGEYVTGPKVVTEDTKNAMRQCLKDIQTGEYAKSFILENKAGAPTLISRRRLTAEHQIEEVGAKLRAMMPWIAKNKLVDQTKN.

In terms of domain architecture, KARI N-terminal Rossmann spans 1–181; it reads MKVFYDKDCD…GGGRAGIIET (181 aa). Residues 24–27, arginine 47, and serine 52 contribute to the NADP(+) site; that span reads YGSQ. The active site involves histidine 107. Glycine 133 serves as a coordination point for NADP(+). The region spanning 182-327 is the KARI C-terminal knotted domain; it reads NFREETETDL…AKLRAMMPWI (146 aa). The Mg(2+) site is built by aspartate 190, glutamate 194, glutamate 226, and glutamate 230. Serine 251 lines the substrate pocket.

It belongs to the ketol-acid reductoisomerase family. Mg(2+) serves as cofactor.

It catalyses the reaction (2R)-2,3-dihydroxy-3-methylbutanoate + NADP(+) = (2S)-2-acetolactate + NADPH + H(+). The enzyme catalyses (2R,3R)-2,3-dihydroxy-3-methylpentanoate + NADP(+) = (S)-2-ethyl-2-hydroxy-3-oxobutanoate + NADPH + H(+). The protein operates within amino-acid biosynthesis; L-isoleucine biosynthesis; L-isoleucine from 2-oxobutanoate: step 2/4. It participates in amino-acid biosynthesis; L-valine biosynthesis; L-valine from pyruvate: step 2/4. Its function is as follows. Involved in the biosynthesis of branched-chain amino acids (BCAA). Catalyzes an alkyl-migration followed by a ketol-acid reduction of (S)-2-acetolactate (S2AL) to yield (R)-2,3-dihydroxy-isovalerate. In the isomerase reaction, S2AL is rearranged via a Mg-dependent methyl migration to produce 3-hydroxy-3-methyl-2-ketobutyrate (HMKB). In the reductase reaction, this 2-ketoacid undergoes a metal-dependent reduction by NADPH to yield (R)-2,3-dihydroxy-isovalerate. In Janthinobacterium sp. (strain Marseille) (Minibacterium massiliensis), this protein is Ketol-acid reductoisomerase (NADP(+)).